The primary structure comprises 515 residues: Maturase K (515 aa).

Belongs to the intron maturase 2 family. MatK subfamily.

The protein resides in the plastid. It localises to the chloroplast. In terms of biological role, usually encoded in the trnK tRNA gene intron. Probably assists in splicing its own and other chloroplast group II introns. The sequence is that of Maturase K from Pinus sibirica (Siberian pine).